The following is a 293-amino-acid chain: 4-hydroxy-tetrahydrodipicolinate synthase (293 aa).

Thr45 contributes to the pyruvate binding site. Residue Tyr133 is the Proton donor/acceptor of the active site. Lys162 serves as the catalytic Schiff-base intermediate with substrate. Pyruvate is bound at residue Ile204.

It belongs to the DapA family. As to quaternary structure, homotetramer; dimer of dimers.

The protein resides in the cytoplasm. The enzyme catalyses L-aspartate 4-semialdehyde + pyruvate = (2S,4S)-4-hydroxy-2,3,4,5-tetrahydrodipicolinate + H2O + H(+). The protein operates within amino-acid biosynthesis; L-lysine biosynthesis via DAP pathway; (S)-tetrahydrodipicolinate from L-aspartate: step 3/4. In terms of biological role, catalyzes the condensation of (S)-aspartate-beta-semialdehyde [(S)-ASA] and pyruvate to 4-hydroxy-tetrahydrodipicolinate (HTPA). This is 4-hydroxy-tetrahydrodipicolinate synthase from Mesorhizobium japonicum (strain LMG 29417 / CECT 9101 / MAFF 303099) (Mesorhizobium loti (strain MAFF 303099)).